The primary structure comprises 393 residues: tRNA(Met) cytidine acetate ligase (393 aa).

The ATP site is built by Gly-81, Asn-142, and Arg-167.

The protein belongs to the TmcAL family.

It localises to the cytoplasm. The catalysed reaction is cytidine(34) in elongator tRNA(Met) + acetate + ATP = N(4)-acetylcytidine(34) in elongator tRNA(Met) + AMP + diphosphate. Catalyzes the formation of N(4)-acetylcytidine (ac(4)C) at the wobble position of elongator tRNA(Met), using acetate and ATP as substrates. First activates an acetate ion to form acetyladenylate (Ac-AMP) and then transfers the acetyl group to tRNA to form ac(4)C34. This Bacillus thuringiensis (strain Al Hakam) protein is tRNA(Met) cytidine acetate ligase.